The primary structure comprises 188 residues: PRA1 family protein F3 (188 aa).

4 helical membrane passes run 74–94, 95–115, 123–143, and 145–165; these read IVVLIVIFFSLIWHPTSLIVF, TVLVVVWIFLYFLRDEPIKLF, TVLIVLSVLTVVLLLLTNATF, and IVGALVTGAVLVLIHSVVRKT.

Belongs to the PRA1 family. Interacts with PRA1F2 and PRA1D. Interacts with ACD11 and BPA1. In terms of tissue distribution, expressed in lateral roots, lateral root caps and columella cells.

It is found in the endoplasmic reticulum membrane. It localises to the membrane. The protein localises to the cytoplasm. Its function is as follows. May be involved in both secretory and endocytic intracellular trafficking in the endosomal/prevacuolar compartments. The chain is PRA1 family protein F3 from Arabidopsis thaliana (Mouse-ear cress).